A 121-amino-acid polypeptide reads, in one-letter code: Large ribosomal subunit protein bL17 (121 aa).

Belongs to the bacterial ribosomal protein bL17 family. As to quaternary structure, part of the 50S ribosomal subunit. Contacts protein L32.

This Metamycoplasma arthritidis (strain 158L3-1) (Mycoplasma arthritidis) protein is Large ribosomal subunit protein bL17.